We begin with the raw amino-acid sequence, 226 residues long: uncharacterized protein (226 aa).

This sequence belongs to the mimivirus L246/L426 family.

This is an uncharacterized protein from Acanthamoeba polyphaga mimivirus (APMV).